The primary structure comprises 269 residues: Shikimate dehydrogenase (NADP(+)) (269 aa).

Shikimate is bound by residues serine 14–serine 16 and threonine 61. Residue lysine 65 is the Proton acceptor of the active site. Glutamate 77 provides a ligand contact to NADP(+). Shikimate contacts are provided by asparagine 86 and aspartate 102. NADP(+) contacts are provided by residues glycine 126–alanine 130, asparagine 149–lysine 154, and methionine 213. Tyrosine 215 contacts shikimate. Glycine 238 lines the NADP(+) pocket.

The protein belongs to the shikimate dehydrogenase family. As to quaternary structure, homodimer.

The catalysed reaction is shikimate + NADP(+) = 3-dehydroshikimate + NADPH + H(+). It participates in metabolic intermediate biosynthesis; chorismate biosynthesis; chorismate from D-erythrose 4-phosphate and phosphoenolpyruvate: step 4/7. Its function is as follows. Involved in the biosynthesis of the chorismate, which leads to the biosynthesis of aromatic amino acids. Catalyzes the reversible NADPH linked reduction of 3-dehydroshikimate (DHSA) to yield shikimate (SA). This chain is Shikimate dehydrogenase (NADP(+)), found in Pasteurella multocida (strain Pm70).